A 295-amino-acid polypeptide reads, in one-letter code: MWGARRSSVSSSWNAASLLQLLLAALLAAGARASGEYCHGWLDAQGVWRIGFQCPERFDGGDATICCGSCALRYCCSSAEARLDQGGCDNDRQQGAGEPGRADKDGPDGSAVPIYVPFLIVGSVFVAFIILGSLVAACCCRCLRPKQDPQQSRAPGGNRLMETIPMIPSASTSRGSSSRQSSTAASSSSSANSGARAPPTRSQTNCCLPEGTMNNVYVNMPTNFSVLNCQQATQIVPHQGQYLHPPYVGYTVQHDSVPMTAVPPFMDGLQPGYRQIQSPFPHTNSEQKMYPAVTV.

The first 33 residues, 1–33 (MWGARRSSVSSSWNAASLLQLLLAALLAAGARA), serve as a signal peptide directing secretion. At 34-110 (SGEYCHGWLD…RADKDGPDGS (77 aa)) the chain is on the extracellular side. Residues 87 to 108 (GCDNDRQQGAGEPGRADKDGPD) form a disordered region. A helical membrane pass occupies residues 111 to 131 (AVPIYVPFLIVGSVFVAFIIL). Residues 132–295 (GSLVAACCCR…EQKMYPAVTV (164 aa)) are Cytoplasmic-facing. Positions 168–205 (PSASTSRGSSSRQSSTAASSSSSANSGARAPPTRSQTN) are disordered. The segment covering 169-197 (SASTSRGSSSRQSSTAASSSSSANSGARA) has biased composition (low complexity).

The protein belongs to the shisa family.

The protein resides in the endoplasmic reticulum membrane. Plays an essential role in the maturation of presomitic mesoderm cells by individual attenuation of both FGF and WNT signaling. This Homo sapiens (Human) protein is Protein shisa-2 homolog (SHISA2).